The sequence spans 317 residues: Acetyl-coenzyme A carboxylase carboxyl transferase subunit alpha (317 aa).

Residues 40 to 293 form the CoA carboxyltransferase C-terminal domain; sequence LEVRVREAIL…GDVIANALAE (254 aa).

It belongs to the AccA family. Acetyl-CoA carboxylase is a heterohexamer composed of biotin carboxyl carrier protein (AccB), biotin carboxylase (AccC) and two subunits each of ACCase subunit alpha (AccA) and ACCase subunit beta (AccD).

The protein resides in the cytoplasm. It carries out the reaction N(6)-carboxybiotinyl-L-lysyl-[protein] + acetyl-CoA = N(6)-biotinyl-L-lysyl-[protein] + malonyl-CoA. It functions in the pathway lipid metabolism; malonyl-CoA biosynthesis; malonyl-CoA from acetyl-CoA: step 1/1. Component of the acetyl coenzyme A carboxylase (ACC) complex. First, biotin carboxylase catalyzes the carboxylation of biotin on its carrier protein (BCCP) and then the CO(2) group is transferred by the carboxyltransferase to acetyl-CoA to form malonyl-CoA. In Rhizobium etli (strain CIAT 652), this protein is Acetyl-coenzyme A carboxylase carboxyl transferase subunit alpha.